We begin with the raw amino-acid sequence, 132 residues long: Putative nickel-responsive regulator (132 aa).

Ni(2+)-binding residues include H77, H88, H90, and C96.

It belongs to the transcriptional regulatory CopG/NikR family. Ni(2+) is required as a cofactor.

Its function is as follows. Transcriptional regulator. In Brucella abortus (strain S19), this protein is Putative nickel-responsive regulator.